We begin with the raw amino-acid sequence, 251 residues long: Imidazole glycerol phosphate synthase subunit HisF (251 aa).

Catalysis depends on residues Asp11 and Asp130.

Belongs to the HisA/HisF family. In terms of assembly, heterodimer of HisH and HisF.

The protein resides in the cytoplasm. The enzyme catalyses 5-[(5-phospho-1-deoxy-D-ribulos-1-ylimino)methylamino]-1-(5-phospho-beta-D-ribosyl)imidazole-4-carboxamide + L-glutamine = D-erythro-1-(imidazol-4-yl)glycerol 3-phosphate + 5-amino-1-(5-phospho-beta-D-ribosyl)imidazole-4-carboxamide + L-glutamate + H(+). It participates in amino-acid biosynthesis; L-histidine biosynthesis; L-histidine from 5-phospho-alpha-D-ribose 1-diphosphate: step 5/9. In terms of biological role, IGPS catalyzes the conversion of PRFAR and glutamine to IGP, AICAR and glutamate. The HisF subunit catalyzes the cyclization activity that produces IGP and AICAR from PRFAR using the ammonia provided by the HisH subunit. The polypeptide is Imidazole glycerol phosphate synthase subunit HisF (Metallosphaera sedula (strain ATCC 51363 / DSM 5348 / JCM 9185 / NBRC 15509 / TH2)).